The chain runs to 325 residues: tRNA(Ile)-lysidine synthase (325 aa).

34 to 39 lines the ATP pocket; that stretch reads SGGADS.

This sequence belongs to the tRNA(Ile)-lysidine synthase family.

Its subcellular location is the cytoplasm. It carries out the reaction cytidine(34) in tRNA(Ile2) + L-lysine + ATP = lysidine(34) in tRNA(Ile2) + AMP + diphosphate + H(+). Its function is as follows. Ligates lysine onto the cytidine present at position 34 of the AUA codon-specific tRNA(Ile) that contains the anticodon CAU, in an ATP-dependent manner. Cytidine is converted to lysidine, thus changing the amino acid specificity of the tRNA from methionine to isoleucine. The sequence is that of tRNA(Ile)-lysidine synthase from Rhodococcus erythropolis (strain PR4 / NBRC 100887).